A 588-amino-acid polypeptide reads, in one-letter code: Tannase (588 aa).

The N-terminal stretch at 1-18 (MRQHSRMAVAALAAGANA) is a signal peptide. 3 disulfides stabilise this stretch: Cys25–Cys71, Cys194–Cys502, and Cys261–Cys278. Ser195 functions as the Acyl-ester intermediate in the catalytic mechanism. Residues Asp262, Asp265, Asp269, and Val271 each coordinate Ca(2+). Residue Gln317 is modified to Pyrrolidone carboxylic acid. Active-site charge relay system residues include Asp455 and His501.

Belongs to the tannase family. Heterooctamer of 4 33 kDa and 4 30 kDa subunits linked by disulfide bond(s). In terms of processing, the protein is glycosylated to a carbohydrate content of 22.7%. The N-terminus of the 30 kDa subunit is blocked.

The enzyme catalyses digallate + H2O = 2 3,4,5-trihydroxybenzoate + H(+). In terms of biological role, hydrolyzes ester bonds of tannic acid to produce gallic acid and glucose. In Aspergillus oryzae (strain ATCC 42149 / RIB 40) (Yellow koji mold), this protein is Tannase.